The sequence spans 148 residues: Wound-induced proteinase inhibitor 2 (148 aa).

The N-terminal stretch at 1-25 is a signal peptide; that stretch reads MAVHKEVNFVAYLLIVLGMFLYVDA. The stretch at 26 to 81 is one 1; trypsin-inhibitory repeat; the sequence is KACTRECGNLGFGICPRSEGSPLNPICINCCSGYKGCNYYNSFGKFICEGESDPKR. 8 cysteine pairs are disulfide-bonded: Cys-28–Cys-116, Cys-32–Cys-112, Cys-40–Cys-122, Cys-52–Cys-89, Cys-55–Cys-73, Cys-56–Cys-85, Cys-62–Cys-98, and Cys-115–Cys-133. The stretch at 83 to 141 is one 2; chymotrypsin-inhibitory repeat; that stretch reads NACTFNCDPNIAYSRCPRSQGKSLIYPTGCTTCCTGYKGCYYFGKDGKFVCEGESDEPK.

It belongs to the protease inhibitor I20 (potato type II proteinase inhibitor) family.

Its subcellular location is the secreted. Its function is as follows. Potent inhibitor of both trypsin and chymotrypsin. The polypeptide is Wound-induced proteinase inhibitor 2 (Solanum lycopersicum (Tomato)).